Here is a 541-residue protein sequence, read N- to C-terminus: MSNKLATVGNNLDSRYTMAGGIRRQINKVFPTHWSFLLGEIALYSFIILILTGVYLTLFFDPSITKVIYDGAYLPLNGVEMSRAYMTALDISFEVRGGLFVRQMHHWAALMFVVSMMVHMMRIFFTGAFRRPREANWVIGVVLLILGIAEGFMGYSLPDDLLSGVGLRIMSAIIVGLPIIGTWMHWMIFGGDFPSDIMLDRFYIAHVLIIPGIILGLIAAHLALVWYQKHTQFPGAGRTENNVIGIRIMPVFAVKSVAFGAITLGFLSLLAGVTTINAIWNLGPYNPSQVSAGSQPDIYMLWTDGAARVMPAWELYFGNYTVPAVFWVAIMLGILVVLLIAYPWIEKKLTGDDAHHNLLQRPRDVPVRTSLGVMALIFYILLTISGGNDIWAYQFDVSLNAMTWIGRIGLIVFPAIGYFVTYRLCIGLQRSDREVLEHGIETGVIKQMPNGAFIEVHQPLGPVDEHGHPIPLPYSGAKVPKQLNELGFAEVESRGGFFGPDPESVATKANEIAHANHLEEVATLAAIQEENRKRDQAEGRI.

Residues Phe-36–Leu-56 form a helical membrane-spanning segment. Residues His-105 and His-119 each contribute to the heme site. Helical transmembrane passes span Ala-109–Phe-129, Trp-137–Leu-157, and Ile-169–Phe-189. Heme contacts are provided by His-206 and His-221. 5 helical membrane passes run Val-207–Tyr-227, Ser-256–Ile-276, Val-325–Ile-345, Leu-371–Trp-391, and Ile-408–Leu-428.

This sequence belongs to the cytochrome b family. The cytochrome bc1 complex is composed of a cytochrome b (QcrB), the Rieske protein iron-sulfur (QcrA) and a diheme cytochrome c (QcrC) subunit. Requires heme as cofactor.

The protein resides in the cell membrane. The enzyme catalyses a quinol + 2 Fe(III)-[cytochrome c](out) = a quinone + 2 Fe(II)-[cytochrome c](out) + 2 H(+)(out). Functionally, cytochrome b subunit of the cytochrome bc1 complex, an essential component of the respiratory electron transport chain required for ATP synthesis. The bc1 complex catalyzes the oxidation of menaquinol and the reduction of cytochrome c in the respiratory chain. The bc1 complex operates through a Q-cycle mechanism that couples electron transfer to generation of the proton gradient that drives ATP synthesis. In Corynebacterium efficiens (strain DSM 44549 / YS-314 / AJ 12310 / JCM 11189 / NBRC 100395), this protein is Cytochrome bc1 complex cytochrome b subunit (qcrB).